Reading from the N-terminus, the 224-residue chain is Myogenin (224 aa).

Phosphoserine; by CaMK2G occurs at positions 77 and 79. The region spanning 81–132 is the bHLH domain; the sequence is DRRRAATLREKRRLKKVNEAFEALKRSTLLNPNQRLPKVEILRSAIQYIERL. Threonine 87 carries the phosphothreonine; by CaMK2G modification.

Homodimer and heterodimer with E12; heterodimerization enhances MYOG DNA-binding and transcriptional activities. Interacts with SMARCA4/BRG1/BAF190A. Interacts (via C-terminal region) with SSRP1 and SUPT16H; the interaction is indicative of an interaction with the FACT complex. nteracts with CSRP3. Post-translationally, phosphorylated by CAMK2G on threonine and serine amino acids in a muscle activity-dependent manner. Phosphorylation of Thr-87 impairs both DNA-binding and trans-activation functions in contracting muscles. As to expression, expressed in myoblast cells. Expressed weakly in myotubes (at protein level). Expressed strongly in denervated muscles and in satellite cells isolated from denervated muscles. Expressed weakly in innervated muscle and in satellite cells isolated from innervated muscles.

It is found in the nucleus. Its function is as follows. Acts as a transcriptional activator that promotes transcription of muscle-specific target genes and plays a role in muscle differentiation, cell cycle exit and muscle atrophy. Essential for the development of functional embryonic skeletal fiber muscle differentiation. However is dispensable for postnatal skeletal muscle growth; phosphorylation by CAMK2G inhibits its transcriptional activity in respons to muscle activity. Required for the recruitment of the FACT complex to muscle-specific promoter regions, thus promoting gene expression initiation. During terminal myoblast differentiation, plays a role as a strong activator of transcription at loci with an open chromatin structure previously initiated by MYOD1. Together with MYF5 and MYOD1, co-occupies muscle-specific gene promoter core regions during myogenesis. Also cooperates with myocyte-specific enhancer factor MEF2D and BRG1-dependent recruitment of SWI/SNF chromatin-remodeling enzymes to alter chromatin structure at myogenic late gene promoters. Facilitates cell cycle exit during terminal muscle differentiation through the up-regulation of miR-20a expression, which in turn represses genes involved in cell cycle progression. Binds to the E-box containing (E1) promoter region of the miR-20a gene. Also plays a role in preventing reversal of muscle cell differentiation. Contributes to the atrophy-related gene expression in adult denervated muscles. Induces fibroblasts to differentiate into myoblasts. This is Myogenin (Myog) from Mus musculus (Mouse).